Consider the following 67-residue polypeptide: MRDVRPEYWMGLDVAVFLFFATSDVDRHLTVFDHSQSFFTSDRGRVLTLSWGHAGQSSIHCVSISGF.

This is an uncharacterized protein from Vaccinia virus (strain Copenhagen) (VACV).